The sequence spans 257 residues: 3-deoxy-manno-octulosonate cytidylyltransferase (257 aa).

Belongs to the KdsB family.

Its subcellular location is the cytoplasm. It catalyses the reaction 3-deoxy-alpha-D-manno-oct-2-ulosonate + CTP = CMP-3-deoxy-beta-D-manno-octulosonate + diphosphate. The protein operates within nucleotide-sugar biosynthesis; CMP-3-deoxy-D-manno-octulosonate biosynthesis; CMP-3-deoxy-D-manno-octulosonate from 3-deoxy-D-manno-octulosonate and CTP: step 1/1. It participates in bacterial outer membrane biogenesis; lipopolysaccharide biosynthesis. Functionally, activates KDO (a required 8-carbon sugar) for incorporation into bacterial lipopolysaccharide in Gram-negative bacteria. The polypeptide is 3-deoxy-manno-octulosonate cytidylyltransferase (Methylobacillus flagellatus (strain ATCC 51484 / DSM 6875 / VKM B-1610 / KT)).